Here is a 351-residue protein sequence, read N- to C-terminus: UDP-N-acetylglucosamine--N-acetylmuramyl-(pentapeptide) pyrophosphoryl-undecaprenol N-acetylglucosamine transferase (351 aa).

UDP-N-acetyl-alpha-D-glucosamine-binding positions include 11 to 13, Asn-120, Arg-161, Ser-187, and Gln-281; that span reads TGG.

This sequence belongs to the glycosyltransferase 28 family. MurG subfamily.

The protein resides in the cell inner membrane. The catalysed reaction is di-trans,octa-cis-undecaprenyl diphospho-N-acetyl-alpha-D-muramoyl-L-alanyl-D-glutamyl-meso-2,6-diaminopimeloyl-D-alanyl-D-alanine + UDP-N-acetyl-alpha-D-glucosamine = di-trans,octa-cis-undecaprenyl diphospho-[N-acetyl-alpha-D-glucosaminyl-(1-&gt;4)]-N-acetyl-alpha-D-muramoyl-L-alanyl-D-glutamyl-meso-2,6-diaminopimeloyl-D-alanyl-D-alanine + UDP + H(+). Its pathway is cell wall biogenesis; peptidoglycan biosynthesis. Cell wall formation. Catalyzes the transfer of a GlcNAc subunit on undecaprenyl-pyrophosphoryl-MurNAc-pentapeptide (lipid intermediate I) to form undecaprenyl-pyrophosphoryl-MurNAc-(pentapeptide)GlcNAc (lipid intermediate II). The chain is UDP-N-acetylglucosamine--N-acetylmuramyl-(pentapeptide) pyrophosphoryl-undecaprenol N-acetylglucosamine transferase from Rippkaea orientalis (strain PCC 8801 / RF-1) (Cyanothece sp. (strain PCC 8801)).